Here is a 290-residue protein sequence, read N- to C-terminus: 4-hydroxy-tetrahydrodipicolinate synthase (290 aa).

Threonine 44 contributes to the pyruvate binding site. Catalysis depends on tyrosine 132, which acts as the Proton donor/acceptor. Residue lysine 160 is the Schiff-base intermediate with substrate of the active site. Position 202 (isoleucine 202) interacts with pyruvate.

The protein belongs to the DapA family. Homotetramer; dimer of dimers.

The protein resides in the cytoplasm. The catalysed reaction is L-aspartate 4-semialdehyde + pyruvate = (2S,4S)-4-hydroxy-2,3,4,5-tetrahydrodipicolinate + H2O + H(+). Its pathway is amino-acid biosynthesis; L-lysine biosynthesis via DAP pathway; (S)-tetrahydrodipicolinate from L-aspartate: step 3/4. Catalyzes the condensation of (S)-aspartate-beta-semialdehyde [(S)-ASA] and pyruvate to 4-hydroxy-tetrahydrodipicolinate (HTPA). This chain is 4-hydroxy-tetrahydrodipicolinate synthase, found in Alkaliphilus oremlandii (strain OhILAs) (Clostridium oremlandii (strain OhILAs)).